The chain runs to 454 residues: B-cell lymphoma 3 protein (454 aa).

Positions 1 to 50 (MPRCPAGAMDEGPVDLRTRPKAAGLPGAALPLRKRPLRAPSPEPAAPRGA) are disordered. Residues 21–31 (KAAGLPGAALP) are compositionally biased toward low complexity. Serine 41 is subject to Phosphoserine. ANK repeat units lie at residues 134-163 (DGDTPLHIAVVQGNLPAVHRLVNLFQQGGR), 171-200 (LRQTPLHLAVITTLPSVVRLLVTAGASPMA), 204-235 (HGQTAAHLACEHRSPTCLRALLDSAAPGTLDL), 241-270 (DGLTALHVAVNTECQETVQLLLERGADIDA), 275-304 (SGRSPLIHAVENNSLSMVQLLLQHGANVNA), 308-337 (SGSSALHSASGRGLLPLVRTLVRSGADSSL), and 338-367 (KNCHNDTPLMVARSRRVIDILRGKATRPAS). Residues 360–454 (GKATRPASTS…VPPSPAPGGS (95 aa)) form a disordered region. Polar residues predominate over residues 365-381 (PASTSQPDPSPDRSANT). Serine 374 bears the Phosphoserine mark. The span at 382-404 (SPESSSRLSSNGLLSASPSSSPS) shows a compositional bias: low complexity. Residues serine 402 and serine 406 each carry the phosphoserine; by GSK3 modification. A compositionally biased stretch (pro residues) spans 405 to 418 (QSPPRDPPGFPMAP). Over residues 432–442 (LPFAGVLRGPG) the composition is skewed to low complexity. Residues 443–454 (RPVPPSPAPGGS) are compositionally biased toward pro residues.

As to quaternary structure, component of a complex consisting of the NF-kappa-B p52-p52 homodimer and BCL3. Component of a complex consisting of the NF-kappa-B p50-p50 homodimer and BCL3. Interacts with N4BP2, COPS5 and PIR. Interacts with CYLD. Post-translationally, polyubiquitinated. Ubiquitination via 'Lys-63'-linked ubiquitin chains is required for nuclear accumulation. Deubiquitinated by CYLD, which acts on 'Lys-63'-linked ubiquitin chains. Deubiquitination by CYLD prevents nuclear accumulation. In terms of processing, activated by phosphorylation.

The protein localises to the nucleus. Its subcellular location is the cytoplasm. It localises to the perinuclear region. Its function is as follows. Contributes to the regulation of transcriptional activation of NF-kappa-B target genes. In the cytoplasm, inhibits the nuclear translocation of the NF-kappa-B p50 subunit. In the nucleus, acts as transcriptional activator that promotes transcription of NF-kappa-B target genes. Contributes to the regulation of cell proliferation. This chain is B-cell lymphoma 3 protein (BCL3), found in Homo sapiens (Human).